We begin with the raw amino-acid sequence, 192 residues long: Ion-translocating oxidoreductase complex subunit A (192 aa).

The next 6 helical transmembrane spans lie at 5 to 25, 39 to 59, 63 to 83, 102 to 122, 134 to 154, and 171 to 191; these read FLLF…FLGL, VGMS…SYIV, ILLP…VIAV, LLGI…LALL, IIYG…FSSM, and SIAM…TGLI.

This sequence belongs to the NqrDE/RnfAE family. The complex is composed of six subunits: RnfA, RnfB, RnfC, RnfD, RnfE and RnfG.

It is found in the cell inner membrane. In terms of biological role, part of a membrane-bound complex that couples electron transfer with translocation of ions across the membrane. The polypeptide is Ion-translocating oxidoreductase complex subunit A (Psychromonas ingrahamii (strain DSM 17664 / CCUG 51855 / 37)).